Here is a 130-residue protein sequence, read N- to C-terminus: Chemotaxis protein CheY-3 (130 aa).

The 118-residue stretch at 10 to 127 (KILIVDDFST…TLKEKLDKIF (118 aa)) folds into the Response regulatory domain. Positions 15, 16, 60, and 62 each coordinate Mg(2+). Residue Asp-60 is modified to 4-aspartylphosphate.

In terms of assembly, interacts with FliM. Mg(2+) serves as cofactor.

It localises to the cytoplasm. Functionally, acts as a response regulator to control chemotaxis. Involved in the transmission of sensory signals from the chemoreceptors to the flagellar motors. Switches the flagellar rotation by binding to the flagellar motor switch protein FliM. In its active (phosphorylated or acetylated) form, exhibits enhanced binding to a switch component, FliM, at the flagellar motor which induces a change from counterclockwise to clockwise flagellar rotation. This chain is Chemotaxis protein CheY-3, found in Vibrio cholerae serotype O1 (strain ATCC 39315 / El Tor Inaba N16961).